Reading from the N-terminus, the 488-residue chain is Centrosomal protein cep57l1 (488 aa).

Positions 71–226 (LESEKTHARD…AQVQTSLEVN (156 aa)) form a coiled coil. Disordered regions lie at residues 232–272 (SASS…PPSK) and 311–342 (PRVSQKDPKTVEHKPSILPGGSRSIPTRLMSS). Residues 241–250 (RKVKKKKQSK) are compositionally biased toward basic residues. 2 stretches are compositionally biased toward basic and acidic residues: residues 259–270 (PSSKEPLSKEPP) and 314–325 (SQKDPKTVEHKP). Positions 377 to 403 (KNTDMREDLERELDYLVKQMEIKSDQI) form a coiled coil. The segment at 416 to 464 (LKKTAKKQPRPPSTTKPAEDEQNIGATDPCTPRNKGNLANGTGTPNSKA) is disordered. Positions 452–464 (NLANGTGTPNSKA) are enriched in polar residues.

This sequence belongs to the translokin family. Interacts with clip1, mis12, ndc80 and zwint. Interacts with gamma-tubulin.

The protein localises to the cytoplasm. The protein resides in the cytoskeleton. Its subcellular location is the microtubule organizing center. It is found in the centrosome. It localises to the chromosome. The protein localises to the centromere. The protein resides in the kinetochore. Its subcellular location is the spindle. Functionally, required for spindle microtubule attachment to both kinetochores and centrosomes. Also functions to tether minus-ends of spindle microtubules to centrosomes. May act by forming ring-like structures around microtubules, or by serving as a cross-linker or scaffold at the attachment site. The polypeptide is Centrosomal protein cep57l1 (cep57l1) (Xenopus laevis (African clawed frog)).